The following is a 1220-amino-acid chain: MNPSELRMMWMSSQYNSERITLEDAATLLGHPTVGLSVMEDLSAHQPTLDMNPMMSLMGGDFTGQAAATAAALGVQPGTLIATNSNNLYGFAHMGGLQQQLLQQSAAAAVFQNYAEAMDNDVENGMVGMAMEAVVDDDDQVYGQRDNNFDDNGSELEPKQEIINIDDFVMMNEDNNSYDGTDFMTSSDKDISQSSSSCMAQMPGSLGVPGVEHDLLVPLPDGLLHHKLLGTTLVPAMGTLNGNAFGNIMVSTENTSSKQMQRTYSTAKGANSTATTATCSASTSSALRSQRKTRKIEPVNRPGLVLKTPIAYRGNIDPSVIPIQKDGMAVCKRCGAIGVKHTFYTKSRRFCSMACARGELYSLVLNTKMEGDQATTSSPDPGAGSESADLPGDQQQSQSDIELDLHAAHIKNANYRFRITDQSKITQLNSFGEPMSMGGDAAANNVQMAADETIAALNGGAVGDATAPGSTEEGASTPNSYLSAAPTPKALRLFKDIYPQDDLPQIPKYERLPVPCPQMEKIISIRRRMYDPTHSYDWLPRLSKENFNAAPVTCFPHAPGCEVWDNLGVGMKVEVENTDCDSIEVIQPGQTPTSFWVATILEIKGYKALMSYEGFDTDSHDFWVNLCNAEVHSVGWCATRGKPLIPPRTIEHKYKDWKDFLVGRLSGARTLPSNFYNKINDSLQSRFRLGLNLECVDKDRISQVRLATVTKIVGKRLFLRYFDSDDGFWCHEDSPIIHPVGWATTVGHNLAAPQDYLERMLAGREAMIEVHEDDATIELFKMNFTFDEYYSDGKTNSFVEGMKLEAVDPLNLSSICPATVMAVLKFGYMMIRIDSYQPDASGSDWFCYHEKSPCIFPAGFCSVNNISVTPPNGYDSRTFTWEGYLRDTGAVAAGQHLFHRIIPDHGFEVGMSLECADLMDPRLVCVATVARVVGRLLKVHFDGWTDEYDQWLDCESADIYPVGWCVLVNHKLEGPPRVAHQQAPKPAPKPKIQRKRKPKKGAAGGKTPTDNNTQSVKSRTIALKTTPHLPKLSIKLELKPEHHNAAFYENNQPEEEGDEEDPDADGDGDGSTSHISEQSTTQSSSDLIAGSGSGSGSASLVTLATGSNKTNSSATNNKYIPRLADIDSSEPHLELVPDTWNVYDVSQFLRVNDCTAHCDTFSRNKIDGKRLLQLTKDDIMPLLGMKVGPALKISDLIAQLKCKVNPGRARSHKTNKSPFL.

The FCS-type zinc finger occupies P322–R357. C331, C334, C351, and C355 together coordinate Zn(2+). Disordered regions lie at residues G371–S399 and D464–S483. Polar residues predominate over residues E473–L482. MBT repeat units follow at residues Y536–P647, K655–P753, L761–P871, and F879–P975. Disordered stretches follow at residues P976–K1024 and N1050–G1092. Positions K991 to K1000 are enriched in basic residues. A compositionally biased stretch (acidic residues) spans Q1052–G1068. A compositionally biased stretch (polar residues) spans S1071–Q1082. The segment covering S1083 to G1092 has biased composition (low complexity). The SAM domain occupies W1140–K1203.

In terms of assembly, interacts with pho as a component of the pho-repressive complex (PhoRC).

The protein resides in the nucleus. Polycomb group (PcG) protein that binds to the Polycomb response elements (PREs) found in the regulatory regions of many genes. PcG proteins act by forming multiprotein complexes, which are required to maintain the transcriptionally repressive state of homeotic genes throughout development. PcG proteins are not required to initiate repression, but to maintain it during later stages of development. They probably act via the methylation of histones, rendering chromatin heritably changed in its expressibility. Necessary but not sufficient to recruit a functional PcG repressive complex that represses target genes, suggesting that the recruitment of the distinct PRC1 complex is also required to allow a subsequent repression. The chain is Polycomb protein Sfmbt from Drosophila melanogaster (Fruit fly).